We begin with the raw amino-acid sequence, 206 residues long: Glycerol-3-phosphate acyltransferase (206 aa).

5 consecutive transmembrane segments (helical) span residues 14-34 (IALA…GLIL), 67-87 (ATLL…GYFL), 91-111 (AAII…WIGF), 124-144 (LLGV…AVAF), and 148-168 (YSSL…LILG).

The protein belongs to the PlsY family. As to quaternary structure, probably interacts with PlsX.

The protein localises to the cell inner membrane. It catalyses the reaction an acyl phosphate + sn-glycerol 3-phosphate = a 1-acyl-sn-glycero-3-phosphate + phosphate. Its pathway is lipid metabolism; phospholipid metabolism. Catalyzes the transfer of an acyl group from acyl-phosphate (acyl-PO(4)) to glycerol-3-phosphate (G3P) to form lysophosphatidic acid (LPA). This enzyme utilizes acyl-phosphate as fatty acyl donor, but not acyl-CoA or acyl-ACP. The protein is Glycerol-3-phosphate acyltransferase of Rhizobium etli (strain CIAT 652).